The following is a 382-amino-acid chain: L-arabinitol 4-dehydrogenase (382 aa).

The Zn(2+) site is built by cysteine 55, histidine 80, glutamate 81, cysteine 110, cysteine 113, cysteine 116, cysteine 124, and glutamate 165. Residues 192 to 193 (PI), aspartate 213, arginine 218, isoleucine 293, and 317 to 319 (QYR) each bind NAD(+).

Belongs to the zinc-containing alcohol dehydrogenase family. Homotetramer. Zn(2+) serves as cofactor.

It catalyses the reaction L-arabinitol + NAD(+) = L-xylulose + NADH + H(+). Its pathway is carbohydrate degradation; L-arabinose degradation via L-arabinitol; D-xylulose 5-phosphate from L-arabinose (fungal route): step 2/5. Its function is as follows. Catalyzes the NAD-dependent oxidation of L-arabinitol to L-xylulose in the fungal L-arabinose catabolic pathway. L-arabinose catabolism is important for using plant material as a carbon source. Also active on ribitol and xylitol. Not active with NADP as cosubstrate. This Aspergillus oryzae (Yellow koji mold) protein is L-arabinitol 4-dehydrogenase (ladA).